A 953-amino-acid chain; its full sequence is Nucleotide-binding oligomerization domain-containing protein 1 (953 aa).

A CARD domain is found at 15-105 (ESHPHIQLLK…AYVDLRPWLL (91 aa)). Residues 196–531 (ETIFILGDAG…AFFTAFFLVL (336 aa)) enclose the NACHT domain. 202 to 209 (GDAGVGKS) serves as a coordination point for ATP. S-palmitoyl cysteine attachment occurs at residues Cys-558 and Cys-567. 9 LRR repeats span residues 632–656 (LKSL…IWML), 702–725 (FPKR…ELQP), 727–750 (FSRL…VLSE), 755–778 (YKIV…YVTK), 783–806 (CKGL…YLAL), 839–862 (HPSL…SLAR), 867–891 (NTSL…LAEM), 895–918 (NQTL…QLAD), and 923–946 (NTGI…VYED). Cys-952 carries S-palmitoyl cysteine lipidation.

Belongs to the NOD1-NOD2 family. In terms of assembly, homooligomer: homooligomerizes following ligand-binding, promoting RIPK2 recruitment. Interacts (via CARD domain) with RIPK2 (via CARD domain). Following RIPK2 recruitment, RIPK2 homooligomerizes via its CARD domain and forms long filaments named RIPosomes. Interacts with ARHGEF2. Interacts (via CARD domain) with ubiquitin; inhibiting interaction with RIPK2. Interacts with NLRP10 and recruits it to the cell membrane following invasive bacterial infection. Interacts with IFIH1; this interaction promotes transcription of antiviral genes and inhibition of viral replication. Interacts with IRGM; promoting NOD1 degradation. Interacts with ATG16L1. Post-translationally, palmitoylated. Palmitoylation is required for proper recruitment to the bacterial entry site and hence for proper signaling upon cognate peptidoglycan detection. Ubiquitinated. 'Lys-48'-linked polyubiquitination by RNF34 promotes proteasomal degradation and thereby negatively regulates NOD1 for instance in NF-kappa-B activation. In terms of processing, degraded via selective autophagy following interaction with IRGM. IRGM promotes NOD1-RIPK2 RIPosome recruitment to autophagosome membranes, promoting their SQSTM1/p62-dependent autophagic degradation. Highly expressed in adult heart, skeletal muscle, pancreas, spleen and ovary. Also detected in placenta, lung, liver, kidney, thymus, testis, small intestine and colon.

The protein localises to the cell membrane. The protein resides in the apical cell membrane. Its subcellular location is the basolateral cell membrane. It localises to the cytoplasm. Pattern recognition receptor (PRR) that detects bacterial peptidoglycan fragments and other danger signals and thus participates in both innate and adaptive immune responses. Specifically recognizes and binds gamma-D-glutamyl-meso-diaminopimelic acid (iE-DAP), a dipeptide present in peptidoglycan of Gram-negative bacteria. Preferentially binds iE-DAP in tripeptide-containing muropeptides (MurNAc-TriDAP or TriDAP). Ligand binding triggers oligomerization that facilitates the binding and subsequent activation of the proximal adapter receptor-interacting RIPK2. Following recruitment, RIPK2 undergoes 'Met-1'- (linear) and 'Lys-63'-linked polyubiquitination by E3 ubiquitin-protein ligases XIAP, BIRC2, BIRC3 and the LUBAC complex, becoming a scaffolding protein for downstream effectors, triggering activation of the NF-kappa-B and MAP kinases signaling. This in turn leads to the transcriptional activation of hundreds of genes involved in immune response. Also acts as a regulator of antiviral response elicited by dsRNA and the expression of RLR pathway members by targeting IFIH1 and TRAF3 to modulate the formation of IFIH1-MAVS and TRAF3-MAVS complexes leading to increased transcription of type I IFNs. Also acts as a regulator of autophagy via its interaction with ATG16L1, possibly by recruiting ATG16L1 at the site of bacterial entry. Besides recognizing pathogens, also involved in the endoplasmic reticulum stress response: acts by sensing and binding to the cytosolic metabolite sphingosine-1-phosphate generated in response to endoplasmic reticulum stress, initiating an inflammation process that leads to activation of the NF-kappa-B and MAP kinases signaling. In addition, plays a role in insulin trafficking in beta cells in a cell-autonomous manner. Mechanistically, upon recognizing cognate ligands, NOD1 and RIPK2 localize to insulin vesicles where they recruit RAB1A to direct insulin trafficking through the cytoplasm. In terms of biological role, in contrast to isoform 1, does not efficiently recognize and bind gamma-D-glutamyl-meso-diaminopimelic acid (iE-DAP) ligand. The chain is Nucleotide-binding oligomerization domain-containing protein 1 from Homo sapiens (Human).